The sequence spans 403 residues: S-adenosylmethionine synthase (403 aa).

H15 contributes to the ATP binding site. D17 provides a ligand contact to Mg(2+). E43 contributes to the K(+) binding site. L-methionine is bound by residues E56 and Q99. The tract at residues 99-109 (QSPDINQGVDR) is flexible loop. Residues 166–168 (DAK), 232–233 (KF), D241, 247–248 (RK), A264, and K268 each bind ATP. D241 serves as a coordination point for L-methionine. K272 contacts L-methionine.

This sequence belongs to the AdoMet synthase family. Homotetramer; dimer of dimers. The cofactor is Mg(2+). Requires K(+) as cofactor.

The protein localises to the cytoplasm. The enzyme catalyses L-methionine + ATP + H2O = S-adenosyl-L-methionine + phosphate + diphosphate. It functions in the pathway amino-acid biosynthesis; S-adenosyl-L-methionine biosynthesis; S-adenosyl-L-methionine from L-methionine: step 1/1. Catalyzes the formation of S-adenosylmethionine (AdoMet) from methionine and ATP. The overall synthetic reaction is composed of two sequential steps, AdoMet formation and the subsequent tripolyphosphate hydrolysis which occurs prior to release of AdoMet from the enzyme. This is S-adenosylmethionine synthase from Xylella fastidiosa (strain Temecula1 / ATCC 700964).